We begin with the raw amino-acid sequence, 990 residues long: Kinesin-related protein 5 (990 aa).

One can recognise a Kinesin motor domain in the interval 6–330; it reads NIRVMCRFRP…LKFGARAKSI (325 aa). Residue 83-90 participates in ATP binding; it reads GQTGSGKT. 2 disordered regions span residues 401–485 and 732–788; these read QSNS…SSID and FSSS…QDQQ. Over residues 406–418 the composition is skewed to gly residues; the sequence is SGGGGSGSSGGSS. Low complexity-rich tracts occupy residues 466-485 and 733-781; these read TSSISSSSISSMSSLSSSID and SSSN…PSSN. A coiled-coil region spans residues 513 to 948; the sequence is IEMEKMKEDT…DQLISTQRLI (436 aa).

It belongs to the TRAFAC class myosin-kinesin ATPase superfamily. Kinesin family. Kinesin subfamily. Interacts with actin.

It localises to the cytoplasm. It is found in the cytoskeleton. Its function is as follows. Microtubule-associated force-producing protein that plays a role in organelle transport. Its motor activity is directed toward the microtubule's plus end. May connect microtubules to actin filaments. Associates with actin-based structures in cells and is likely involved in the organization of actin cytoskeletons in such structures. This is Kinesin-related protein 5 (kif5) from Dictyostelium discoideum (Social amoeba).